Here is a 369-residue protein sequence, read N- to C-terminus: Small ribosomal subunit biogenesis GTPase RsgA (369 aa).

Positions R88–P246 constitute a CP-type G domain. GTP contacts are provided by residues N137 to D140 and G188 to S196. C271, C276, H278, and C284 together coordinate Zn(2+). A disordered region spans residues Q307–E369. The span at T359–E369 shows a compositional bias: acidic residues.

This sequence belongs to the TRAFAC class YlqF/YawG GTPase family. RsgA subfamily. As to quaternary structure, monomer. Associates with 30S ribosomal subunit, binds 16S rRNA. Zn(2+) serves as cofactor.

The protein localises to the cytoplasm. In terms of biological role, one of several proteins that assist in the late maturation steps of the functional core of the 30S ribosomal subunit. Helps release RbfA from mature subunits. May play a role in the assembly of ribosomal proteins into the subunit. Circularly permuted GTPase that catalyzes slow GTP hydrolysis, GTPase activity is stimulated by the 30S ribosomal subunit. This Synechocystis sp. (strain ATCC 27184 / PCC 6803 / Kazusa) protein is Small ribosomal subunit biogenesis GTPase RsgA.